The primary structure comprises 98 residues: Tax1-binding protein 3 (98 aa).

Serine 2 is subject to N-acetylserine. Residues 12 to 87 (VVQRVEIHKL…VVRLLVTRQS (76 aa)) enclose the PDZ domain.

Interacts (via its PDZ domain) with GLS2. Interacts (via its PDZ domain) with RTKN (via the C-terminal region); this interaction facilitates Rho-mediated activation of the FOS serum response element (SRE). Interacts (via PDZ domain) with ARHGEF16. Interacts (via PDZ domain) with KCNJ4 (via C-terminus). Competes with LIN7A for KCNJ4 binding. Interacts (via its PDZ domain) with CTNNB1; this interaction inhibits the transcriptional activity of CTNNB1. Interacts with ADGRB2. As to expression, detected in kidney distal convoluted tubules (at protein level).

It is found in the cytoplasm. Its subcellular location is the nucleus. It localises to the cell membrane. Its function is as follows. May regulate a number of protein-protein interactions by competing for PDZ domain binding sites. Binds CTNNB1 and may thereby act as an inhibitor of the Wnt signaling pathway. Competes with LIN7A for KCNJ4 binding, and thereby promotes KCNJ4 internalization. May play a role in the Rho signaling pathway. The sequence is that of Tax1-binding protein 3 from Rattus norvegicus (Rat).